Reading from the N-terminus, the 224-residue chain is Urease accessory protein UreF (224 aa).

It belongs to the UreF family. In terms of assembly, ureD, UreF and UreG form a complex that acts as a GTP-hydrolysis-dependent molecular chaperone, activating the urease apoprotein by helping to assemble the nickel containing metallocenter of UreC. The UreE protein probably delivers the nickel.

It is found in the cytoplasm. Functionally, required for maturation of urease via the functional incorporation of the urease nickel metallocenter. This chain is Urease accessory protein UreF, found in Pseudomonas putida (strain ATCC 700007 / DSM 6899 / JCM 31910 / BCRC 17059 / LMG 24140 / F1).